The sequence spans 214 residues: cAMP-activated global transcriptional regulator Vfr (214 aa).

Residues 59–60 (RE), 73–75 (GEL), 87–88 (RS), 132–133 (TT), arginine 179, and arginine 185 contribute to the 3',5'-cyclic AMP site. Residues 142-214 (LDVTGRVART…GKTMVVFGTR (73 aa)) form the HTH crp-type domain. The H-T-H motif DNA-binding region spans 174–193 (RQEIGRIVGCSREMVGRVLK).

In terms of assembly, homodimer.

Its function is as follows. Global cAMP-dependent transcriptional regulator that controls virulence gene expression by distinct cAMP-dependent and -independent mechanisms, which allow to fine tune its virulence program in response to specific host cues or environments. Controls the expression of many regulatory targets including type II, type III and type IV secretion systems, flagellar-mediated motility, and quorum sensing systems. Transcriptional control is exerted by binding to a well-characterized consensus site (5'-ANWWTGNGAWNYAGWTCACAT) within target promoters. Directly binds to the toxA upstream region to regulate exotoxin A production, to the lasR gene promoter to activate the las quorum-sensing system or to the exsA promoter to regulate type III secretion system. Autoregulates as well its own expression. In Pseudomonas aeruginosa (strain ATCC 15692 / DSM 22644 / CIP 104116 / JCM 14847 / LMG 12228 / 1C / PRS 101 / PAO1), this protein is cAMP-activated global transcriptional regulator Vfr (vfr).